The chain runs to 153 residues: Insulin-like growth factor 1 (153 aa).

The b stretch occupies residues 49 to 77; sequence GPETLCGAELVDALQFVCGDRGFYFNKPT. 3 disulfides stabilise this stretch: Cys54–Cys96, Cys66–Cys109, and Cys95–Cys100. The segment at 78–89 is c; that stretch reads GYGSSSRRAPQT. An a region spans residues 90–110; it reads GIVDECCFRSCDLRRLEMYCA. Residues 111–118 form a d region; that stretch reads PLKPAKSA. A propeptide spans 119 to 153 (e peptide); that stretch reads RSVRAQRHTDMPKAQKEVHLKNASRGSAGNKNYRM. The interval 120–153 is disordered; that stretch reads SVRAQRHTDMPKAQKEVHLKNASRGSAGNKNYRM. A compositionally biased stretch (basic and acidic residues) spans 125 to 138; sequence RHTDMPKAQKEVHL. Positions 142-153 are enriched in polar residues; it reads SRGSAGNKNYRM.

This sequence belongs to the insulin family. As to quaternary structure, forms a ternary complex with IGFR1 and ITGAV:ITGB3. Forms a ternary complex with IGFR1 and ITGA6:ITGB4. Forms a ternary complex with IGFBP3 and ALS.

It localises to the secreted. Its function is as follows. The insulin-like growth factors, isolated from plasma, are structurally and functionally related to insulin but have a much higher growth-promoting activity. May be a physiological regulator of [1-14C]-2-deoxy-D-glucose (2DG) transport and glycogen synthesis in osteoblasts. Stimulates glucose transport in bone-derived osteoblastic (PyMS) cells and is effective at much lower concentrations than insulin, not only regarding glycogen and DNA synthesis but also with regard to enhancing glucose uptake. May play a role in synapse maturation. Ca(2+)-dependent exocytosis of IGF1 is required for sensory perception of smell in the olfactory bulb. Acts as a ligand for IGF1R. Binds to the alpha subunit of IGF1R, leading to the activation of the intrinsic tyrosine kinase activity which autophosphorylates tyrosine residues in the beta subunit thus initiating a cascade of down-stream signaling events leading to activation of the PI3K-AKT/PKB and the Ras-MAPK pathways. Binds to integrins ITGAV:ITGB3 and ITGA6:ITGB4. Its binding to integrins and subsequent ternary complex formation with integrins and IGFR1 are essential for IGF1 signaling. Induces the phosphorylation and activation of IGFR1, MAPK3/ERK1, MAPK1/ERK2 and AKT1. As part of the MAPK/ERK signaling pathway, acts as a negative regulator of apoptosis in cardiomyocytes via promotion of STUB1/CHIP-mediated ubiquitination and degradation of ICER-type isoforms of CREM. This Canis lupus familiaris (Dog) protein is Insulin-like growth factor 1.